Here is a 102-residue protein sequence, read N- to C-terminus: Small ribosomal subunit protein uS10 (102 aa).

This sequence belongs to the universal ribosomal protein uS10 family. As to quaternary structure, part of the 30S ribosomal subunit.

Functionally, involved in the binding of tRNA to the ribosomes. This chain is Small ribosomal subunit protein uS10, found in Chelativorans sp. (strain BNC1).